A 684-amino-acid chain; its full sequence is Ski-like protein (684 aa).

Glycyl lysine isopeptide (Lys-Gly) (interchain with G-Cter in SUMO2) cross-links involve residues Lys50 and Lys70. Residues 420–454 (SQSKELTKTEASKSISRQSEKAHSSGKLQKTVSYP) form a disordered region. Ser452 carries the post-translational modification Phosphoserine. Glycyl lysine isopeptide (Lys-Gly) (interchain with G-Cter in SUMO2) cross-links involve residues Lys489 and Lys527. Residues 536–684 (RTYLKQQEKL…ILKSSKTAKE (149 aa)) adopt a coiled-coil conformation.

This sequence belongs to the SKI family. Interacts with CPNE4 (via VWFA domain). Interacts with SMAD2, SMAD3 and RNF111. Isoform 1 interacts with WWP1. Post-translationally, ubiquitinated by RNF111 and ARK2C, promoting proteasomal degradation, leading to enhance the BMP-Smad signaling. In terms of tissue distribution, isoform SNON and isoform SNOA are widely expressed. Highest expression is found in skeletal muscle, followed by placenta and lung. Lowest expression in heart, brain and pancreas. Isoform SNOI expression is restricted to skeletal muscle.

In terms of biological role, may have regulatory role in cell division or differentiation in response to extracellular signals. The sequence is that of Ski-like protein (SKIL) from Homo sapiens (Human).